A 337-amino-acid chain; its full sequence is MDYKPEPELHSESSERLFSFGVIADIQYADLEDGYNFQGNRRRYYRHSLLHLQGAIEHWNQERSPPRCVLQLGDIIDGYNAQYKASEKSLERVMNTFQMLRVPVHHTWGNHEFYNFSRDYLTNSKLNTKFLEDQIAHHPETVPSEDYYAYHFVPFPKFRFILLDAYDMSVLGVDQSSPKYQQCLKILREHNPNTELNSPQGLREPQFVQFNGGFSPEQLNWLNAVLTFSDRNQEKVVIVSHLPIYPEASDSVCLAWNYRDALAVIWSHKCVVCFFAGHTHDGGYSEDPYGVHHVNIEGVIETAPDSQAFGTVHVYPDKMMLEGRGRVPHRIMNYRKE.

Met1 is subject to N-acetylmethionine. Residues Asp25, Gln27, Asp74, Asn110, His241, His278, and His280 each coordinate Zn(2+).

It belongs to the ADPRibase-Mn family. Monomer. Requires Mg(2+) as cofactor.

The catalysed reaction is CDP-choline + H2O = phosphocholine + CMP + 2 H(+). It carries out the reaction ADP-D-ribose + H2O = D-ribose 5-phosphate + AMP + 2 H(+). It catalyses the reaction CDP-glycerol + H2O = sn-glycerol 3-phosphate + CMP + 2 H(+). Its function is as follows. Hydrolyzes ADP-ribose, IDP-ribose, CDP-glycerol, CDP-choline and CDP-ethanolamine, but not other non-reducing ADP-sugars or CDP-glucose. May be involved in immune cell signaling as suggested by the second-messenger role of ADP-ribose, which activates TRPM2 as a mediator of oxidative/nitrosative stress. The sequence is that of Manganese-dependent ADP-ribose/CDP-alcohol diphosphatase (ADPRM) from Bos taurus (Bovine).